A 385-amino-acid chain; its full sequence is MYVSRLQLQDFRIYRSLNLALPPGVCLFYGANAAGKTTILEALYYLATTRSLRASVERELIALEAAGDLGLPPFARLAASLQPQPEAEMQTIEIVLQRKFGADGDLAPTTSKTIRINKIARRALDLIGQLRVVMFAPQDLELVTGAPAERRRYLDVTLSQIDGRYVRALSRYNQVLTQRNGLLRTSRERGRAASEQDLAFWDEELAKAGVYVLRERRRAVTTLDQLAQRLYAEISGSDLDLRLNYLDTTPAHDVPSFQAALKQLRREERERGVTLIGPHRDDLSIQLAEREVGSFGSRGQQRASTLALRLAEAELMHSRTGDRPVLLLDDLLSELDQKRREHLLTTIVRPQQQTLITATDLDDFSPNFLSQITRMHVDHGLIFPA.

Residue 30–37 (GANAAGKT) coordinates ATP.

This sequence belongs to the RecF family.

The protein resides in the cytoplasm. The RecF protein is involved in DNA metabolism; it is required for DNA replication and normal SOS inducibility. RecF binds preferentially to single-stranded, linear DNA. It also seems to bind ATP. The sequence is that of DNA replication and repair protein RecF from Herpetosiphon aurantiacus (strain ATCC 23779 / DSM 785 / 114-95).